Here is a 341-residue protein sequence, read N- to C-terminus: UDP-3-O-acylglucosamine N-acyltransferase (341 aa).

The Proton acceptor role is filled by histidine 239.

The protein belongs to the transferase hexapeptide repeat family. LpxD subfamily. In terms of assembly, homotrimer.

It carries out the reaction a UDP-3-O-[(3R)-3-hydroxyacyl]-alpha-D-glucosamine + a (3R)-hydroxyacyl-[ACP] = a UDP-2-N,3-O-bis[(3R)-3-hydroxyacyl]-alpha-D-glucosamine + holo-[ACP] + H(+). It participates in bacterial outer membrane biogenesis; LPS lipid A biosynthesis. Its function is as follows. Catalyzes the N-acylation of UDP-3-O-acylglucosamine using 3-hydroxyacyl-ACP as the acyl donor. Is involved in the biosynthesis of lipid A, a phosphorylated glycolipid that anchors the lipopolysaccharide to the outer membrane of the cell. This Idiomarina loihiensis (strain ATCC BAA-735 / DSM 15497 / L2-TR) protein is UDP-3-O-acylglucosamine N-acyltransferase.